We begin with the raw amino-acid sequence, 184 residues long: MDLSSLRPAKGAVKNKKRVGRGQGSGNGTTAGKGNKGQQARSGYKRPINEGGQIPVYRRLPKFGFTPIDRKSVTTVNLSQITRWIEQGLIENELGVIELKVLCHASNADYFKVLGNGEITAAVKITAHGFSKSAEAKITAAGGEAVTAVRTLEEAARVRDLAVEEALLKPKTKLVKRVKKNQKP.

Residues 1–50 form a disordered region; that stretch reads MDLSSLRPAKGAVKNKKRVGRGQGSGNGTTAGKGNKGQQARSGYKRPINE. Residues 21–35 are compositionally biased toward gly residues; the sequence is RGQGSGNGTTAGKGN.

This sequence belongs to the universal ribosomal protein uL15 family. As to quaternary structure, part of the 50S ribosomal subunit.

Its function is as follows. Binds to the 23S rRNA. The polypeptide is Large ribosomal subunit protein uL15 (Chlorobium luteolum (strain DSM 273 / BCRC 81028 / 2530) (Pelodictyon luteolum)).